The chain runs to 381 residues: Cobalt-precorrin-5B C(1)-methyltransferase (381 aa).

This sequence belongs to the CbiD family.

It carries out the reaction Co-precorrin-5B + S-adenosyl-L-methionine = Co-precorrin-6A + S-adenosyl-L-homocysteine. It participates in cofactor biosynthesis; adenosylcobalamin biosynthesis; cob(II)yrinate a,c-diamide from sirohydrochlorin (anaerobic route): step 6/10. Catalyzes the methylation of C-1 in cobalt-precorrin-5B to form cobalt-precorrin-6A. The polypeptide is Cobalt-precorrin-5B C(1)-methyltransferase (Prochlorococcus marinus (strain NATL1A)).